We begin with the raw amino-acid sequence, 312 residues long: uncharacterized protein (312 aa).

2 disordered regions span residues 1 to 26 and 45 to 106; these read MQKD…AMVA and GNLQ…LPSG. Residues 8–17 are compositionally biased toward basic residues; the sequence is RFQRNKKKIN. Over residues 68–77 the composition is skewed to basic and acidic residues; sequence NGKRNGDKVR. Polar residues predominate over residues 85–103; that stretch reads GHSSYAGSRISGGNSNSHL.

This is an uncharacterized protein from Schizosaccharomyces pombe (strain 972 / ATCC 24843) (Fission yeast).